A 1134-amino-acid polypeptide reads, in one-letter code: Envelopment polyprotein (1134 aa).

A signal peptide spans 1–18 (MGIWKWLVMASLVWPVLT). Over 19–487 (LRNVYDMKIE…GFHGWATAAL (469 aa)) the chain is Lumenal. Disulfide bonds link Cys-29/Cys-151, Cys-63/Cys-157, Cys-109/Cys-128, Cys-133/Cys-138, Cys-175/Cys-185, Cys-210/Cys-247, Cys-234/Cys-351, and Cys-380/Cys-389. The N-linked (GlcNAc...) asparagine; by host glycan is linked to Asn-134. 2 N-linked (GlcNAc...) asparagine; by host glycosylation sites follow: Asn-235 and Asn-347. Asn-399 carries an N-linked (GlcNAc...) asparagine; by host glycan. 2 disulfides stabilise this stretch: Cys-405–Cys-424 and Cys-452–Cys-475. Residues 488–508 (LVTFCFGWVLIPAVTFIILAI) form a helical membrane-spanning segment. At 509–627 (LKFIANIFHT…LNLFRYKSRC (119 aa)) the chain is on the cytoplasmic side. Residues 516 to 533 (FHTSNQENRLKSVLRKIK) are binding to the ribonucleoprotein. 2 consecutive CCHC-type zinc fingers follow at residues 545–565 (CDVC…GVSC) and 570–591 (CPYC…YKVC). Binding to the ribonucleoprotein stretches follow at residues 588 to 605 (YKVC…KKTV), 592 to 603 (QVTHRFRDDLKK), and 611 to 625 (TPGC…RYKS). Positions 611-634 (TPGCYRTLNLFRYKSRCYIFTMWI) constitute an ITAM domain. The YxxL motif lies at 615–618 (YRTL). A helical transmembrane segment spans residues 628 to 648 (YIFTMWIFLLVLESILWAASA). At 649-1104 (SETPLTPVWN…EWISGIFSGN (456 aa)) the chain is on the lumenal side. Cystine bridges form between Cys-734–Cys-769, Cys-738–Cys-776, Cys-750–Cys-884, Cys-764–Cys-895, Cys-779–Cys-903, Cys-805–Cys-814, and Cys-822–Cys-831. The interval 756-776 (YQYETSWGCNPSDCPGCGTGC) is fusion loop. N-linked (GlcNAc...) asparagine; by host glycosylation occurs at Asn-927. 5 disulfides stabilise this stretch: Cys-969/Cys-999, Cys-992/Cys-1044, Cys-1009/Cys-1014, Cys-1045/Cys-1050, and Cys-1084/Cys-1088. The helical transmembrane segment at 1105–1125 (WIVLIVLCVFLLFSLVLLSIL) threads the bilayer. The tract at residues 1121–1134 (LLSILCPVRKHKKS) is binding to the ribonucleoprotein. Residues 1126-1134 (CPVRKHKKS) lie on the Cytoplasmic side of the membrane.

Belongs to the hantavirus envelope glycoprotein family. As to quaternary structure, homodimer. Homotetramer; forms heterotetrameric Gn-Gc spikes in the pre-fusion conformation. Interacts (via C-terminus) with the nucleoprotein. Interacts with host TUFM; this interaction contributes to the virus-induced degradation of mitochondria by autophagy, which leads to degradation of host MAVS and inhibition of type I interferon (IFN) responses. Interacts with host MAP1LC3B; this interaction contributes to the virus-induced degradation of mitochondria by autophagy, which leads to degradation of host MAVS and inhibition of type I interferon (IFN) responses. In terms of assembly, homodimer. Homotetramer; forms heterotetrameric Gn-Gc spikes in the pre-fusion conformation. Homotrimer; forms homotrimer in the post-fusion conformation at acidic pH. Interacts (via C-terminus) with the nucleoprotein. Envelope polyprotein precursor is quickly cleaved in vivo just after synthesis, presumably by host signal peptidase.

It is found in the virion membrane. The protein localises to the host cell surface. Its subcellular location is the host Golgi apparatus membrane. It localises to the host endoplasmic reticulum membrane. The protein resides in the host mitochondrion. Its function is as follows. Forms homotetramers with glycoprotein C at the surface of the virion. Attaches the virion to host cell receptors including integrin ITGAV/ITGB3. This attachment induces virion internalization predominantly through clathrin-dependent endocytosis. May also bind to host C1QBP for virus entry into the host cell. Mediates the assembly and budding of infectious virus particles through its interaction with the nucleocapsid protein and the viral genome. May dysregulate normal immune and endothelial cell responses through an ITAM motif. Translocates to mitochondria, binds to host TUFM and recruits MAP1LC3B. These interactions induce mitochondrial autophagy and therefore destruction of host MAVS leading to inhibition of type I interferon (IFN) responses. Concomitant breakdown of glycoprotein N is apparently prevented by the nucleoprotein that may inhibit Gn-stimulated autophagosome-lysosome fusion. Interacts with the viral genomic RNA. Functionally, forms homotetramers with glycoprotein N at the surface of the virion. Attaches the virion to host cell receptors including integrin ITGAV/ITGB3. This attachment induces virion internalization predominantly through clathrin-dependent endocytosis. May also bind to host C1QBP for virus entry into the host cell. Class II fusion protein that promotes fusion of viral membrane with host endosomal membrane after endocytosis of the virion. In Apodemus agrarius (Eurasian field mouse), this protein is Envelopment polyprotein (GP).